The chain runs to 468 residues: Methionine aminopeptidase 2 (468 aa).

Basic and acidic residues predominate over residues M1–G10. Residues M1–F106 form a disordered region. The segment covering D16 to S25 has biased composition (polar residues). Over residues R31–D40 the composition is skewed to basic and acidic residues. A compositionally biased stretch (acidic residues) spans G46 to E56. Positions V61–T75 are enriched in polar residues. Basic residues predominate over residues K78–S90. Substrate is bound at residue H219. The a divalent metal cation site is built by D240, D251, and H320. H328 contributes to the substrate binding site. E353 and E449 together coordinate a divalent metal cation.

It belongs to the peptidase M24A family. Methionine aminopeptidase eukaryotic type 2 subfamily. It depends on Co(2+) as a cofactor. Zn(2+) serves as cofactor. Requires Mn(2+) as cofactor. The cofactor is Fe(2+).

Its subcellular location is the cytoplasm. It catalyses the reaction Release of N-terminal amino acids, preferentially methionine, from peptides and arylamides.. Cotranslationally removes the N-terminal methionine from nascent proteins. The N-terminal methionine is often cleaved when the second residue in the primary sequence is small and uncharged (Met-Ala-, Cys, Gly, Pro, Ser, Thr, or Val). The polypeptide is Methionine aminopeptidase 2 (Aspergillus oryzae (strain ATCC 42149 / RIB 40) (Yellow koji mold)).